We begin with the raw amino-acid sequence, 234 residues long: Enterobactin synthase component D (234 aa).

Mg(2+) is bound by residues Asp-107, Glu-109, and Glu-152.

This sequence belongs to the P-Pant transferase superfamily. EntD family. In terms of assembly, entB, EntD, EntE, and EntF form a multienzyme complex called enterobactin synthase. Mg(2+) is required as a cofactor.

Its subcellular location is the membrane. It carries out the reaction apo-[aryl-carrier protein] + CoA = holo-[aryl-carrier protein] + adenosine 3',5'-bisphosphate + H(+). It catalyses the reaction apo-[peptidyl-carrier protein] + CoA = holo-[peptidyl-carrier protein] + adenosine 3',5'-bisphosphate + H(+). It functions in the pathway siderophore biosynthesis; enterobactin biosynthesis. Its function is as follows. Involved in the biosynthesis of the siderophore enterobactin (enterochelin), which is a macrocyclic trimeric lactone of N-(2,3-dihydroxybenzoyl)-serine. The serine trilactone serves as a scaffolding for the three catechol functionalities that provide hexadentate coordination for the tightly ligated iron(2+) atoms. Plays an essential role in the assembly of the enterobactin by catalyzing the transfer of the 4'-phosphopantetheine (Ppant) moiety from coenzyme A to the apo-domains of both EntB (ArCP domain) and EntF (PCP domain) to yield their holo-forms which make them competent for the activation of 2,3-dihydroxybenzoate (DHB) and L-serine, respectively. This Salmonella typhimurium (strain LT2 / SGSC1412 / ATCC 700720) protein is Enterobactin synthase component D.